Reading from the N-terminus, the 242-residue chain is 1-(5-phosphoribosyl)-5-[(5-phosphoribosylamino)methylideneamino] imidazole-4-carboxamide isomerase (242 aa).

Residue Asp8 is the Proton acceptor of the active site. Residue Asp130 is the Proton donor of the active site.

It belongs to the HisA/HisF family.

It localises to the cytoplasm. It catalyses the reaction 1-(5-phospho-beta-D-ribosyl)-5-[(5-phospho-beta-D-ribosylamino)methylideneamino]imidazole-4-carboxamide = 5-[(5-phospho-1-deoxy-D-ribulos-1-ylimino)methylamino]-1-(5-phospho-beta-D-ribosyl)imidazole-4-carboxamide. Its pathway is amino-acid biosynthesis; L-histidine biosynthesis; L-histidine from 5-phospho-alpha-D-ribose 1-diphosphate: step 4/9. The sequence is that of 1-(5-phosphoribosyl)-5-[(5-phosphoribosylamino)methylideneamino] imidazole-4-carboxamide isomerase from Thioalkalivibrio sulfidiphilus (strain HL-EbGR7).